The sequence spans 120 residues: Insulin-like peptide 3 (120 aa).

A signal peptide spans 1–29 (MGIEMRCQDRRILLPSLLLLILMIGGVQA). 3 disulfide bridges follow: C34-C101, C46-C114, and C100-C105. The propeptide at 51–89 (NAMTKRTLDPVNFNQIDGFEDRSLLERLLSDSSVQMLKT) is connecting peptide.

This sequence belongs to the insulin family. As to quaternary structure, heterodimer of a B chain and an A chain linked by two disulfide bonds. In terms of tissue distribution, expressed at a high level in seven cells of each larval brain hemisphere that may correspond to neurosecretory cells.

It is found in the secreted. Functionally, possible ligand of InR/insulin-like receptor. This Drosophila melanogaster (Fruit fly) protein is Insulin-like peptide 3.